A 478-amino-acid polypeptide reads, in one-letter code: Calcium/calmodulin-dependent protein kinase type II subunit alpha (478 aa).

At tyrosine 13 the chain carries Phosphotyrosine. Residues 13–271 (YQLFEELGKG…AAEALKHPWI (259 aa)) form the Protein kinase domain. ATP is bound by residues 19-27 (LGKGAFSVV) and lysine 42. The active-site Proton acceptor is the aspartate 135. Serine 257 carries the post-translational modification Phosphoserine. A Phosphothreonine; by autocatalysis modification is found at threonine 286. The calmodulin-binding stretch occupies residues 290-300 (LKKFNARRKLK). The tract at residues 310-320 (TRNFSGGKSGG) is interaction with BAALC. A disordered region spans residues 314 to 341 (SGGKSGGNKKSDGVKESSESTNTTIEDE). Over residues 322–331 (KKSDGVKESS) the composition is skewed to basic and acidic residues. Phosphoserine is present on residues serine 330, serine 331, and serine 333. Phosphothreonine is present on residues threonine 336 and threonine 337. A Phosphoserine modification is found at serine 404.

It belongs to the protein kinase superfamily. CAMK Ser/Thr protein kinase family. CaMK subfamily. There are 4 genes encoding calcium/calmodulin-dependent protein kinase type II chains: CAMK2A, CAMK2B, CAMK2G and CAMK2D. The corresponding proteins assemble into homo- or heteromultimeric holoenzymes composed of 12 subunits with two hexameric rings stacked one on top of the other. Interacts with BAALC. Interacts with MPDZ. Interacts with SYN1. Interacts with CAMK2N2. Interacts with SYNGAP1. Interacts with SYNPO2. Interacts with SHANK3. Interacts with GRIN2B. Interacts with CACNB2. Interacts with LRRC7. Interacts with GRM5. Interacts with DAGLA (via C-terminal); this interaction is enhanced by autophosphorylation of CAMK2A at Thr-286. Interacts with CAMK2N1; this interaction requires CAMK2A activation by Ca(2+). It depends on Mg(2+) as a cofactor. Autophosphorylation of Thr-286 following activation by Ca(2+)/calmodulin. Phosphorylation of Thr-286 locks the kinase into an activated state. In terms of processing, palmitoylated. Probably palmitoylated by ZDHHC3 and ZDHHC7.

The protein localises to the synapse. The protein resides in the postsynaptic density. It localises to the cell projection. It is found in the dendritic spine. Its subcellular location is the dendrite. The enzyme catalyses L-seryl-[protein] + ATP = O-phospho-L-seryl-[protein] + ADP + H(+). It carries out the reaction L-threonyl-[protein] + ATP = O-phospho-L-threonyl-[protein] + ADP + H(+). Its activity is regulated as follows. Activated by Ca(2+)/calmodulin. Binding of calmodulin results in conformational change that relieves intrasteric autoinhibition and allows autophosphorylation of Thr-286 which turns the kinase in a constitutively active form and confers to the kinase a Ca(2+)-independent activity. Calcium/calmodulin-dependent protein kinase that functions autonomously after Ca(2+)/calmodulin-binding and autophosphorylation, and is involved in various processes, such as synaptic plasticity, neurotransmitter release and long-term potentiation. Member of the NMDAR signaling complex in excitatory synapses, it regulates NMDAR-dependent potentiation of the AMPAR and therefore excitatory synaptic transmission. Regulates dendritic spine development. Also regulates the migration of developing neurons. Phosphorylates the transcription factor FOXO3 to activate its transcriptional activity. Phosphorylates the transcription factor ETS1 in response to calcium signaling, thereby decreasing ETS1 affinity for DNA. In response to interferon-gamma (IFN-gamma) stimulation, catalyzes phosphorylation of STAT1, stimulating the JAK-STAT signaling pathway. In response to interferon-beta (IFN-beta) stimulation, stimulates the JAK-STAT signaling pathway. Acts as a negative regulator of 2-arachidonoylglycerol (2-AG)-mediated synaptic signaling via modulation of DAGLA activity. The polypeptide is Calcium/calmodulin-dependent protein kinase type II subunit alpha (CAMK2A) (Pongo abelii (Sumatran orangutan)).